A 271-amino-acid polypeptide reads, in one-letter code: Tryptophan synthase alpha chain (271 aa).

Residues Glu-49 and Asp-60 each act as proton acceptor in the active site.

This sequence belongs to the TrpA family. As to quaternary structure, tetramer of two alpha and two beta chains.

The catalysed reaction is (1S,2R)-1-C-(indol-3-yl)glycerol 3-phosphate + L-serine = D-glyceraldehyde 3-phosphate + L-tryptophan + H2O. The protein operates within amino-acid biosynthesis; L-tryptophan biosynthesis; L-tryptophan from chorismate: step 5/5. Functionally, the alpha subunit is responsible for the aldol cleavage of indoleglycerol phosphate to indole and glyceraldehyde 3-phosphate. This Burkholderia multivorans (strain ATCC 17616 / 249) protein is Tryptophan synthase alpha chain.